The primary structure comprises 782 residues: MPGKLRSASKSESEGTEESMETLQKPSEKKTRKEKPKSKTDEATEGVEEAASSKVKAVKKKGPSEDDVGPPKSKKAKKQEEEPQDDPASKSKTSKKKKEPLEKKAPSAKTKEMKAEEPSEEEADAPKPKKTKKGKEANGDVGEKSPGLKNGLSHPKPDSSSTQAPGEESETEKEIPVEQKEGAFSNFPISEETVKLLKARGVNFLFPIQAKTFHHVYSGKDLIAQARTGTGKTFSFAIPLIEKLQGGLQERKRGRAPQVLVLAPTRELANQVSKDFSDITKKLSVACFYGGTPYGGQIERMRSGIDILVGTPGRIKDHLQNGKLDLTKLKHVVLDEVDQMLDMGFADQVEEILCVAYKKDSEDNPQTLLFSATCPHWVFNVAKKYMKSTYEQVDLIGKKTQKAAITVEHLAIKCHWTERAAVIGDVIRVYSGHQGRTIIFCETKKDAQELSQNTCIKQDAQSLHGDIPQKQREITLKGFRNGNFGVLVATNVAARGLDIPEVDLVVQSCPPKDVESYIHRSGRTGRAGRTGVCICFYQHKEEYQLAQVEQKAGIKFKRIGVPSATEIIKASSKDAIRLLDSVPPTAIGHFKQSAEKLIEEKGAVEALAAALAHISGATSVDQRSLINSQAGFVTMILRCSVEMPNISYAWKELKEQLGESIDAKVKGMVFLKGKLGVCFDVRTEAVTEIKEKWHDSRRWQLTVATEQPELEGPPEGYRGGRGQRDGSRGSFRGQRGGSRNFRGQGQRGGSRNFRGQRPGGGNKSNRSPNKGQKRSFSKAFGQ.

The disordered stretch occupies residues 1-184; the sequence is MPGKLRSASK…IPVEQKEGAF (184 aa). Phosphoserine occurs at positions 7 and 13. Basic and acidic residues-rich tracts occupy residues 26–42 and 99–117; these read PSEK…KTDE and EPLE…KAEE. At Lys-39 the chain carries N6-acetyllysine. A Glycyl lysine isopeptide (Lys-Gly) (interchain with G-Cter in SUMO1); alternate cross-link involves residue Lys-114. Lys-114 is covalently cross-linked (Glycyl lysine isopeptide (Lys-Gly) (interchain with G-Cter in SUMO2); alternate). Ser-119 bears the Phosphoserine mark. Residues 134–143 are compositionally biased toward basic and acidic residues; it reads GKEANGDVGE. The residue at position 135 (Lys-135) is an N6-acetyllysine. Ser-145 and Ser-169 each carry phosphoserine. Over residues 172-181 the composition is skewed to basic and acidic residues; it reads EKEIPVEQKE. Residues 182 to 210 carry the Q motif motif; it reads GAFSNFPISEETVKLLKARGVNFLFPIQA. Residues 213-392 enclose the Helicase ATP-binding domain; that stretch reads FHHVYSGKDL…KKYMKSTYEQ (180 aa). 226–233 provides a ligand contact to ATP; sequence ARTGTGKT. Thr-292 bears the Phosphothreonine mark. The short motif at 335–338 is the DEAD box element; that stretch reads DEVD. Residues 425–569 form the Helicase C-terminal domain; that stretch reads DVIRVYSGHQ…GVPSATEIIK (145 aa). A Phosphoserine modification is found at Ser-563. Lys-596 bears the N6-acetyllysine mark. Residues 704-782 form a disordered region; that stretch reads ATEQPELEGP…KRSFSKAFGQ (79 aa). A run of 3 repeats spans residues 720-724, 731-735, and 741-747. Residues 720–747 form a 3 X 5 AA repeats region; that stretch reads GRGQRDGSRGSFRGQRGGSRNFRGQGQR. Positions 728 to 756 are enriched in low complexity; it reads RGSFRGQRGGSRNFRGQGQRGGSRNFRGQ. An N6-acetyllysine modification is found at Lys-778.

This sequence belongs to the DEAD box helicase family. DDX21/DDX50 subfamily. In terms of assembly, homodimer; homodimerizes via its N-terminus. Found in a multi-helicase-TICAM1 complex at least composed of DHX36, DDX1, DDX21 and TICAM1; this complex exists in resting cells with or without poly(I:C) RNA ligand stimulation. Interacts (via C-terminus) with TICAM1 (via TIR domain). Interacts with DHX36 (via C-terminus); this interaction serves as bridges to TICAM1. Interacts (via C-terminus) with DDX1 (via B30.2/SPRY domain); this interaction serves as bridges to TICAM1. Component of the B-WICH complex, at least composed of SMARCA5/SNF2H, BAZ1B/WSTF, SF3B1, DEK, MYO1C, ERCC6, MYBBP1A and DDX21. Interacts with C1QBP. Interacts with JUN. Interacts with WDR46. Interacts with MCM3AP. Interacts with WDR43. Interacts with KPNA3. Interacts with GID4. Acetylation by CREBBP/CBP inhibits the helicase activity. Deacetylation by SIRT7 promotes the helicase activity and overcomes R-loop-mediated stalling of RNA polymerases.

It is found in the nucleus. It localises to the nucleolus. The protein resides in the nucleoplasm. Its subcellular location is the cytoplasm. The protein localises to the cytosol. It is found in the mitochondrion. It carries out the reaction ATP + H2O = ADP + phosphate + H(+). Its activity is regulated as follows. Acetylation inhibits the helicase activity. Functionally, RNA helicase that acts as a sensor of the transcriptional status of both RNA polymerase (Pol) I and II: promotes ribosomal RNA (rRNA) processing and transcription from polymerase II (Pol II). Binds various RNAs, such as rRNAs, snoRNAs, 7SK and, at lower extent, mRNAs. In the nucleolus, localizes to rDNA locus, where it directly binds rRNAs and snoRNAs, and promotes rRNA transcription, processing and modification. Required for rRNA 2'-O-methylation, possibly by promoting the recruitment of late-acting snoRNAs SNORD56 and SNORD58 with pre-ribosomal complexes. In the nucleoplasm, binds 7SK RNA and is recruited to the promoters of Pol II-transcribed genes: acts by facilitating the release of P-TEFb from inhibitory 7SK snRNP in a manner that is dependent on its helicase activity, thereby promoting transcription of its target genes. Functions as a cofactor for JUN-activated transcription: required for phosphorylation of JUN at 'Ser-77'. Can unwind double-stranded RNA (helicase) and can fold or introduce a secondary structure to a single-stranded RNA (foldase). Together with SIRT7, required to prevent R-loop-associated DNA damage and transcription-associated genomic instability: deacetylation by SIRT7 activates the helicase activity, thereby overcoming R-loop-mediated stalling of RNA polymerases. Involved in rRNA processing. May bind to specific miRNA hairpins. Component of a multi-helicase-TICAM1 complex that acts as a cytoplasmic sensor of viral double-stranded RNA (dsRNA) and plays a role in the activation of a cascade of antiviral responses including the induction of pro-inflammatory cytokines via the adapter molecule TICAM1. This chain is Nucleolar RNA helicase 2 (Ddx21), found in Rattus norvegicus (Rat).